The following is a 491-amino-acid chain: MKLHELTLMEVKRGLEQGDFSSEELVTSVYDRIEETEDHIKAYITLTKEQALAQSKEIDSQRAKGEELGPLAGIPVAIKDNICTKDVTTSCASKILEDFVPPYNATVISKLAEAGAIIVGKTNMDEFAMGSSTENSAFFVTSNPWDTERVPGGSSGGSAASVASAQVPLALGSDTGGSIRQPASFCGVVGMKPTYGRVSRYGLVAFASSLDQIGPLSKNVEDTALALDIISGHDHMDSTSVDLEVPNHTDFLNQDIDELTIGIPKEYYELVDNDVKSLVESSLQSIEPEAGNYRQVSLPTTEHALSAYYLIAPAEASSNLARFDGVRYGQRFATDDLKTMYNQTRKEGFGNEVKQRVMLGTYALSAGYYDALYLKALKVRSLIKQEFEQVFSECDVLIAPTTPTVPFREGENVDDPLTMYKNDICTAPVNLAGLPSISIPCGFSNGLPVGLQVIGKAFDEGKVIQVAHKIEQMLQVFKNAPQQGLDNQGGK.

Residues K79 and S154 each act as charge relay system in the active site. Residue S178 is the Acyl-ester intermediate of the active site.

It belongs to the amidase family. GatA subfamily. In terms of assembly, heterotrimer of A, B and C subunits.

The catalysed reaction is L-glutamyl-tRNA(Gln) + L-glutamine + ATP + H2O = L-glutaminyl-tRNA(Gln) + L-glutamate + ADP + phosphate + H(+). Functionally, allows the formation of correctly charged Gln-tRNA(Gln) through the transamidation of misacylated Glu-tRNA(Gln) in organisms which lack glutaminyl-tRNA synthetase. The reaction takes place in the presence of glutamine and ATP through an activated gamma-phospho-Glu-tRNA(Gln). This Natranaerobius thermophilus (strain ATCC BAA-1301 / DSM 18059 / JW/NM-WN-LF) protein is Glutamyl-tRNA(Gln) amidotransferase subunit A.